The primary structure comprises 263 residues: Small ribosomal subunit protein eS1 (263 aa).

Residues 235-254 (HGEGGGGKREAGDKSERPEG) show a composition bias toward basic and acidic residues. The interval 235-263 (HGEGGGGKREAGDKSERPEGYEPPVQESV) is disordered.

It belongs to the eukaryotic ribosomal protein eS1 family. Component of the small ribosomal subunit. Mature ribosomes consist of a small (40S) and a large (60S) subunit. The 40S subunit contains about 33 different proteins and 1 molecule of RNA (18S). The 60S subunit contains about 49 different proteins and 3 molecules of RNA (28S, 5.8S and 5S).

It is found in the cytoplasm. This chain is Small ribosomal subunit protein eS1, found in Bombyx mandarina (Wild silk moth).